The following is a 591-amino-acid chain: Aspartate--tRNA(Asp/Asn) ligase (591 aa).

An L-aspartate-binding site is contributed by E175. Residues 199-202 form an aspartate region; the sequence is QQFK. Positions 221 and 453 each coordinate L-aspartate. Position 221–223 (221–223) interacts with ATP; it reads RDE. E486 lines the ATP pocket. R493 lines the L-aspartate pocket. 538–541 is an ATP binding site; that stretch reads GIDR.

This sequence belongs to the class-II aminoacyl-tRNA synthetase family. Type 1 subfamily. Homodimer.

It localises to the cytoplasm. It carries out the reaction tRNA(Asx) + L-aspartate + ATP = L-aspartyl-tRNA(Asx) + AMP + diphosphate. Functionally, aspartyl-tRNA synthetase with relaxed tRNA specificity since it is able to aspartylate not only its cognate tRNA(Asp) but also tRNA(Asn). Reaction proceeds in two steps: L-aspartate is first activated by ATP to form Asp-AMP and then transferred to the acceptor end of tRNA(Asp/Asn). This chain is Aspartate--tRNA(Asp/Asn) ligase, found in Cereibacter sphaeroides (strain ATCC 17025 / ATH 2.4.3) (Rhodobacter sphaeroides).